A 367-amino-acid polypeptide reads, in one-letter code: Putative F-box protein At3g21120 (367 aa).

The 43-residue stretch at 1 to 43 folds into the F-box domain; the sequence is MHLPEDLVLEILSKVPAVSLARFRSTCRRWNALVVDGSFAKKH.

The chain is Putative F-box protein At3g21120 from Arabidopsis thaliana (Mouse-ear cress).